A 340-amino-acid chain; its full sequence is Phosphate acyltransferase (340 aa).

This sequence belongs to the PlsX family. In terms of assembly, homodimer. Probably interacts with PlsY.

The protein resides in the cytoplasm. The enzyme catalyses a fatty acyl-[ACP] + phosphate = an acyl phosphate + holo-[ACP]. It participates in lipid metabolism; phospholipid metabolism. Functionally, catalyzes the reversible formation of acyl-phosphate (acyl-PO(4)) from acyl-[acyl-carrier-protein] (acyl-ACP). This enzyme utilizes acyl-ACP as fatty acyl donor, but not acyl-CoA. The polypeptide is Phosphate acyltransferase (Pseudomonas syringae pv. tomato (strain ATCC BAA-871 / DC3000)).